Reading from the N-terminus, the 122-residue chain is Acidic phospholipase A2 (122 aa).

7 cysteine pairs are disulfide-bonded: cysteine 26/cysteine 115, cysteine 28/cysteine 44, cysteine 43/cysteine 95, cysteine 49/cysteine 122, cysteine 50/cysteine 88, cysteine 57/cysteine 81, and cysteine 75/cysteine 86. Positions 27, 29, and 31 each coordinate Ca(2+). Histidine 47 is a catalytic residue. Residue aspartate 48 coordinates Ca(2+). The active site involves aspartate 89.

As to quaternary structure, may form tetramers. Ca(2+) serves as cofactor. As to expression, expressed by the venom gland.

The protein localises to the secreted. The catalysed reaction is a 1,2-diacyl-sn-glycero-3-phosphocholine + H2O = a 1-acyl-sn-glycero-3-phosphocholine + a fatty acid + H(+). PLA2 catalyzes the calcium-dependent hydrolysis of the 2-acyl groups in 3-sn-phosphoglycerides. In vivo, is non-lethal to mice when intravenously injected up to a concentration of 30 ug, however does show significant edematogenic activity at the injection site. This chain is Acidic phospholipase A2, found in Lachesis acrochorda (Chocoan bushmaster).